A 324-amino-acid chain; its full sequence is Serine/threonine-protein phosphatase PP1 isozyme 8 (324 aa).

Positions 66, 68, 94, and 126 each coordinate Mn(2+). The Proton donor role is filled by His-127. Mn(2+) is bound by residues His-175 and His-250.

Belongs to the PPP phosphatase family. PP-1 subfamily. Mn(2+) is required as a cofactor. Expressed in roots, rosettes and flowers.

It localises to the nucleus. Its subcellular location is the cytoplasm. It catalyses the reaction O-phospho-L-seryl-[protein] + H2O = L-seryl-[protein] + phosphate. The catalysed reaction is O-phospho-L-threonyl-[protein] + H2O = L-threonyl-[protein] + phosphate. Phosphatase activity is strongly reduced by the protein phosphatase inhibitor 2 (I-2). Functionally, serine/threonine-protein phosphatase that possesses phosphatase activity toward para-nitrophenyl phosphate (pNPP) in vitro. The chain is Serine/threonine-protein phosphatase PP1 isozyme 8 from Arabidopsis thaliana (Mouse-ear cress).